An 854-amino-acid polypeptide reads, in one-letter code: Arsenate respiratory reductase molybdopterin-containing subunit ArrA (854 aa).

The tat-type signal signal peptide spans 1–41; the sequence is MKKENQVNLGRRQLLKSTAAGTVLTGIGGTLSFTPIVEGIA. Residues 54-110 form the 4Fe-4S Mo/W bis-MGD-type domain; that stretch reads GEWLATTCQGCTSWCAKQIYVMDGRALKVRGNPNSGVHGMSSCPRQHLSLQQVYDPD. [4Fe-4S] cluster is bound by residues cysteine 61, cysteine 64, cysteine 68, and cysteine 96. Position 165 (arginine 165) interacts with arsenite. An arsenate-binding site is contributed by tyrosine 166. Histidine 189 contacts arsenite. Position 190 (serine 190) interacts with arsenate. Residue cysteine 193 participates in Mo-bis(molybdopterin guanine dinucleotide) binding. Residue lysine 198 participates in arsenate binding. Tyrosine 210 contributes to the arsenite binding site.

Belongs to the prokaryotic molybdopterin-containing oxidoreductase family. In terms of assembly, heterodimer composed of one large subunit (ArrA) and one small subunit (ArrB). Requires [4Fe-4S] cluster as cofactor. Mo-bis(molybdopterin guanine dinucleotide) serves as cofactor. In terms of processing, predicted to be exported by the Tat system. The position of the signal peptide cleavage has not been experimentally proven.

The protein localises to the periplasm. It carries out the reaction arsenite + A + H2O = arsenate + AH2 + H(+). With respect to regulation, phosphate is a competitive inhibitor. Component of the arsenate respiratory reductase (Arr) complex, which catalyzes the reduction of arsenate (As(V)) to arsenite (As(III)). ArrA is the arsenate-binding subunit. The periplasmic localization of this complex may allow the cell to couple arsenate reduction to energy production before arsenate can be transported to the cell cytoplasm and enter the ars detoxification pathway, an energy-requiring process. The polypeptide is Arsenate respiratory reductase molybdopterin-containing subunit ArrA (Shewanella sp. (strain ANA-3)).